The sequence spans 1092 residues: NAD-specific glutamate dehydrogenase (1092 aa).

The active site involves lysine 626.

Belongs to the Glu/Leu/Phe/Val dehydrogenases family. Homotetramer. Interacts with NNK1. In terms of processing, phosphorylated by a complex containing the NNK1 kinase.

It carries out the reaction L-glutamate + NAD(+) + H2O = 2-oxoglutarate + NH4(+) + NADH + H(+). In terms of biological role, NAD(+)-dependent glutamate dehydrogenase which degrades glutamate to ammonia and alpha-ketoglutarate. The sequence is that of NAD-specific glutamate dehydrogenase (GDH2) from Saccharomyces cerevisiae (strain ATCC 204508 / S288c) (Baker's yeast).